Here is a 375-residue protein sequence, read N- to C-terminus: MLRFDLLHTEGHARRGRLTLNHGVVETPIFMPVGTYGTVKGVMPASLEAMGAQIILGNTFHLWLRPGLDVLRQFGGLHRFENWQRPILTDSGGFQVWSLGAMRKISEEGVKFASPVNGDKLFLTPETSMQIQTVLNSDIVMQFDECTPYETSGHLTTEQEARASMELSLRWAARCKTEFARLENPNALFGIVQGGMFEPLRQASLDALVAMDFPGYAIGGVSVGEPKDEMLRIMAHTPHRLPAHKPRYLMGVGTPEDLVEGVTQGVDLFDCVMPTRNARNGHLFTRHGDLRLRNARYKTDERPIDESCTCTACNGFSRAYLHHLDRCGEMLGPMLTSIHNLHYFLNLMREVREALDAGRFEAFRAQFRADRARGV.

Asp-90 acts as the Proton acceptor in catalysis. Substrate-binding positions include 90-94 (DSGGF), Asp-144, Gln-193, and Gly-220. Positions 251–257 (GVGTPED) are RNA binding. Asp-270 serves as the catalytic Nucleophile. The tract at residues 275 to 279 (TRNAR) is RNA binding; important for wobble base 34 recognition. Zn(2+) contacts are provided by Cys-308, Cys-310, Cys-313, and His-339.

Belongs to the queuine tRNA-ribosyltransferase family. As to quaternary structure, homodimer. Within each dimer, one monomer is responsible for RNA recognition and catalysis, while the other monomer binds to the replacement base PreQ1. The cofactor is Zn(2+).

The catalysed reaction is 7-aminomethyl-7-carbaguanine + guanosine(34) in tRNA = 7-aminomethyl-7-carbaguanosine(34) in tRNA + guanine. The protein operates within tRNA modification; tRNA-queuosine biosynthesis. Catalyzes the base-exchange of a guanine (G) residue with the queuine precursor 7-aminomethyl-7-deazaguanine (PreQ1) at position 34 (anticodon wobble position) in tRNAs with GU(N) anticodons (tRNA-Asp, -Asn, -His and -Tyr). Catalysis occurs through a double-displacement mechanism. The nucleophile active site attacks the C1' of nucleotide 34 to detach the guanine base from the RNA, forming a covalent enzyme-RNA intermediate. The proton acceptor active site deprotonates the incoming PreQ1, allowing a nucleophilic attack on the C1' of the ribose to form the product. After dissociation, two additional enzymatic reactions on the tRNA convert PreQ1 to queuine (Q), resulting in the hypermodified nucleoside queuosine (7-(((4,5-cis-dihydroxy-2-cyclopenten-1-yl)amino)methyl)-7-deazaguanosine). In Methylibium petroleiphilum (strain ATCC BAA-1232 / LMG 22953 / PM1), this protein is Queuine tRNA-ribosyltransferase.